A 33-amino-acid chain; its full sequence is Photosystem II reaction center protein Psb30 (33 aa).

The chain crosses the membrane as a helical span at residues 5–25 (VIAQPIVLGLIVASGPLVIVS).

The protein belongs to the Psb30/Ycf12 family. PSII is composed of 1 copy each of membrane proteins PsbA, PsbB, PsbC, PsbD, PsbE, PsbF, PsbH, PsbI, PsbJ, PsbK, PsbL, PsbM, PsbT, PsbX, PsbY, PsbZ, Psb30/Ycf12, peripheral proteins of the oxygen-evolving complex and a large number of cofactors. It forms dimeric complexes.

The protein localises to the plastid membrane. A core subunit of photosystem II (PSII), probably helps stabilize the reaction center. The chain is Photosystem II reaction center protein Psb30 from Aneura mirabilis (Parasitic liverwort).